The following is a 250-amino-acid chain: tRNA (guanine-N(7)-)-methyltransferase (250 aa).

Residues 1–10 show a composition bias toward basic and acidic residues; that stretch reads MTPDDPRDAS. The interval 1 to 30 is disordered; it reads MTPDDPRDASDASLADATADSASRGHGSFF. Positions 11–24 are enriched in low complexity; the sequence is DASLADATADSASR. S-adenosyl-L-methionine-binding residues include glutamate 79, glutamate 104, aspartate 131, and aspartate 153. The active site involves aspartate 153. Lysine 157 and aspartate 189 together coordinate substrate.

It belongs to the class I-like SAM-binding methyltransferase superfamily. TrmB family.

It carries out the reaction guanosine(46) in tRNA + S-adenosyl-L-methionine = N(7)-methylguanosine(46) in tRNA + S-adenosyl-L-homocysteine. Its pathway is tRNA modification; N(7)-methylguanine-tRNA biosynthesis. Catalyzes the formation of N(7)-methylguanine at position 46 (m7G46) in tRNA. This Rhodopseudomonas palustris (strain BisA53) protein is tRNA (guanine-N(7)-)-methyltransferase.